A 316-amino-acid polypeptide reads, in one-letter code: Transaldolase (316 aa).

The Schiff-base intermediate with substrate role is filled by K132.

It belongs to the transaldolase family. Type 1 subfamily. In terms of assembly, homodimer.

The protein localises to the cytoplasm. It catalyses the reaction D-sedoheptulose 7-phosphate + D-glyceraldehyde 3-phosphate = D-erythrose 4-phosphate + beta-D-fructose 6-phosphate. Its pathway is carbohydrate degradation; pentose phosphate pathway; D-glyceraldehyde 3-phosphate and beta-D-fructose 6-phosphate from D-ribose 5-phosphate and D-xylulose 5-phosphate (non-oxidative stage): step 2/3. Its function is as follows. Transaldolase is important for the balance of metabolites in the pentose-phosphate pathway. This is Transaldolase from Marinomonas sp. (strain MWYL1).